Consider the following 246-residue polypeptide: 3-deoxy-manno-octulosonate cytidylyltransferase (246 aa).

Belongs to the KdsB family.

The protein resides in the cytoplasm. The catalysed reaction is 3-deoxy-alpha-D-manno-oct-2-ulosonate + CTP = CMP-3-deoxy-beta-D-manno-octulosonate + diphosphate. Its pathway is nucleotide-sugar biosynthesis; CMP-3-deoxy-D-manno-octulosonate biosynthesis; CMP-3-deoxy-D-manno-octulosonate from 3-deoxy-D-manno-octulosonate and CTP: step 1/1. It functions in the pathway bacterial outer membrane biogenesis; lipopolysaccharide biosynthesis. Functionally, activates KDO (a required 8-carbon sugar) for incorporation into bacterial lipopolysaccharide in Gram-negative bacteria. This chain is 3-deoxy-manno-octulosonate cytidylyltransferase, found in Bradyrhizobium sp. (strain ORS 278).